Here is a 138-residue protein sequence, read N- to C-terminus: Small ribosomal subunit protein uS12 (138 aa).

Aspartate 89 bears the 3-methylthioaspartic acid mark. Residues 107 to 138 form a disordered region; it reads VSGRMQRRSKYGAKFPKTGTGKTKAVPTKNKK.

The protein belongs to the universal ribosomal protein uS12 family. Part of the 30S ribosomal subunit. Contacts proteins S8 and S17. May interact with IF1 in the 30S initiation complex.

In terms of biological role, with S4 and S5 plays an important role in translational accuracy. Interacts with and stabilizes bases of the 16S rRNA that are involved in tRNA selection in the A site and with the mRNA backbone. Located at the interface of the 30S and 50S subunits, it traverses the body of the 30S subunit contacting proteins on the other side and probably holding the rRNA structure together. The combined cluster of proteins S8, S12 and S17 appears to hold together the shoulder and platform of the 30S subunit. The sequence is that of Small ribosomal subunit protein uS12 from Azobacteroides pseudotrichonymphae genomovar. CFP2.